The primary structure comprises 836 residues: Phenylalanine--tRNA ligase beta subunit (836 aa).

The region spanning 44–160 is the tRNA-binding domain; sequence PETTGPLVIG…EIAEPGTDAR (117 aa). Residues 420 to 495 enclose the B5 domain; the sequence is PSMPQIRMKT…RLEGLEDIPT (76 aa). Residues Asp-473, Asp-479, Glu-482, and Glu-483 each contribute to the Mg(2+) site. The FDX-ACB domain occupies 742–835; it reads SAFPVLHQDL…AAELFGATMR (94 aa).

It belongs to the phenylalanyl-tRNA synthetase beta subunit family. Type 1 subfamily. As to quaternary structure, tetramer of two alpha and two beta subunits. It depends on Mg(2+) as a cofactor.

It localises to the cytoplasm. It catalyses the reaction tRNA(Phe) + L-phenylalanine + ATP = L-phenylalanyl-tRNA(Phe) + AMP + diphosphate + H(+). This Corynebacterium diphtheriae (strain ATCC 700971 / NCTC 13129 / Biotype gravis) protein is Phenylalanine--tRNA ligase beta subunit.